Reading from the N-terminus, the 361-residue chain is Aminomethyltransferase (361 aa).

The protein belongs to the GcvT family. The glycine cleavage system is composed of four proteins: P, T, L and H.

The enzyme catalyses N(6)-[(R)-S(8)-aminomethyldihydrolipoyl]-L-lysyl-[protein] + (6S)-5,6,7,8-tetrahydrofolate = N(6)-[(R)-dihydrolipoyl]-L-lysyl-[protein] + (6R)-5,10-methylene-5,6,7,8-tetrahydrofolate + NH4(+). The glycine cleavage system catalyzes the degradation of glycine. The protein is Aminomethyltransferase of Phocaeicola vulgatus (strain ATCC 8482 / DSM 1447 / JCM 5826 / CCUG 4940 / NBRC 14291 / NCTC 11154) (Bacteroides vulgatus).